A 401-amino-acid polypeptide reads, in one-letter code: MAPNAAVLVRPHIAGVHHLPTGRRLPRLAPPQAVSPPFSRQKGSVVAASGRVWASASGSFEKDRIGDDDVLASPQIVEESKVDLLKILKSANTIIPHVVLGSTILALVYPPSFTWFTTRYYAPALGFLMFAVGVNSSVKDFIEAIQRPDAIAAGYVGQFIIKPFLGFLFGTLAVTIFNLPTALGAGIMLVSCVSGAQLSNYATFLTDPHMAPLSIVMTSLSTATAVFVTPTLSYFLIGKKLPVDVKGMMSSIVQIVVAPIAAGLLLNRYLPRLCSAIQPFLPPLSVFVTALCVGSPLAINIKAVLSPFGLATVLLLFAFHTSSFIAGYHLAGTWFRESADVKALQRTVSFETGMQSSLLALALANRFFPDPLVGVPPAISVVLMSLMGFALVMVWSKRTKE.

The transit peptide at 1 to 46 (MAPNAAVLVRPHIAGVHHLPTGRRLPRLAPPQAVSPPFSRQKGSVV) directs the protein to the chloroplast. 9 helical membrane-spanning segments follow: residues 93–113 (TIIPHVVLGSTILALVYPPSF), 122–142 (APALGFLMFAVGVNSSVKDFI), 159–179 (FIIKPFLGFLFGTLAVTIFNL), 185–205 (AGIMLVSCVSGAQLSNYATFL), 215–235 (IVMTSLSTATAVFVTPTLSYF), 247–267 (GMMSSIVQIVVAPIAAGLLLN), 273–293 (LCSAIQPFLPPLSVFVTALCV), 299–319 (INIKAVLSPFGLATVLLLFAF), and 372–392 (LVGVPPAISVVLMSLMGFALV).

The protein belongs to the bile acid:sodium symporter (BASS) (TC 2.A.28) family.

Its subcellular location is the membrane. It localises to the plastid. The protein resides in the chloroplast envelope. In terms of biological role, may function as sodium-coupled metabolite transporter across the chloroplast envelope. This is Probable sodium/metabolite cotransporter BASS5, chloroplastic (BASS5) from Oryza sativa subsp. indica (Rice).